The chain runs to 353 residues: Melatonin receptor type 1A (353 aa).

Residues 1–32 are Extracellular-facing; it reads MKGNVSELLNATQQAPGGGEGGRPRPSWLAST. N4 and N10 each carry an N-linked (GlcNAc...) asparagine glycan. Residues 33–53 traverse the membrane as a helical segment; sequence LAFILIFTIVVDILGNLLVIL. The Cytoplasmic portion of the chain corresponds to 54–66; the sequence is SVYRNKKLRNSGN. Residues 67–87 form a helical membrane-spanning segment; it reads IFVVSLAVADLVVAVYPYPLV. The Extracellular portion of the chain corresponds to 88-105; sequence LTSILNNGWNLGYLHCQV. A disulfide bridge connects residues C103 and C180. A helical membrane pass occupies residues 106–126; the sequence is SAFLMGLSVIGSIFNITGIAM. Residues 127–145 lie on the Cytoplasmic side of the membrane; the sequence is NRYCYICHSLKYDKIYSNK. Residues 146–166 form a helical membrane-spanning segment; the sequence is NSLCYVFLIWMLTLIAIMPNL. Over 167 to 190 the chain is Extracellular; sequence QTGTLQYDPRIYSCTFTQSVSSAY. The chain crosses the membrane as a helical span at residues 191-211; that stretch reads TIAVVVFHFIVPMIIVIFCYL. The Cytoplasmic segment spans residues 212–243; the sequence is RIWVLVLQVRRRVKPDNKPKLKPQDFRNFVTM. A helical membrane pass occupies residues 244-264; that stretch reads FVVFVLFAICWAPLNLIGLIV. Residues 265-277 lie on the Extracellular side of the membrane; that stretch reads ASDPATMVPRIPE. A helical transmembrane segment spans residues 278-298; the sequence is WLFVASYYLAYFNSCLNAIIY. The Cytoplasmic segment spans residues 299 to 353; that stretch reads GLLNQNFRKEYKKIIVSLCTAKMFFVESSNEEADKIKCKPSPLIPNNNLIKVDSV.

Belongs to the G-protein coupled receptor 1 family.

It localises to the cell membrane. Functionally, high affinity receptor for melatonin. Likely to mediate the reproductive and circadian actions of melatonin. The activity of this receptor is mediated by pertussis toxin sensitive G proteins that inhibit adenylate cyclase activity. Possibly involved in sleep induction, by melatonin activation of the potassium channel KCNMA1/BK and the dissociation of G-beta and G-gamma subunits, thereby decreasing synaptic transmission. The protein is Melatonin receptor type 1A (Mtnr1a) of Mus musculus (Mouse).